The sequence spans 324 residues: Elongation factor P--(R)-beta-lysine ligase (324 aa).

75 to 77 (SPE) is a binding site for substrate. Residues 99 to 101 (RNE) and Asn-108 each bind ATP. Tyr-117 contributes to the substrate binding site. Residue 243 to 244 (EL) participates in ATP binding. A substrate-binding site is contributed by Glu-250. Position 299 (Gly-299) interacts with ATP.

This sequence belongs to the class-II aminoacyl-tRNA synthetase family. EpmA subfamily. As to quaternary structure, homodimer.

The enzyme catalyses D-beta-lysine + L-lysyl-[protein] + ATP = N(6)-((3R)-3,6-diaminohexanoyl)-L-lysyl-[protein] + AMP + diphosphate + H(+). Its function is as follows. With EpmB is involved in the beta-lysylation step of the post-translational modification of translation elongation factor P (EF-P). Catalyzes the ATP-dependent activation of (R)-beta-lysine produced by EpmB, forming a lysyl-adenylate, from which the beta-lysyl moiety is then transferred to the epsilon-amino group of a conserved specific lysine residue in EF-P. In Pseudoalteromonas translucida (strain TAC 125), this protein is Elongation factor P--(R)-beta-lysine ligase.